The primary structure comprises 368 residues: Phosphate acyltransferase (368 aa).

The segment at 335–368 (VSLGDGEHDAGGAGPASPAAGHHAEPSAAQSSKA) is disordered. Residues 349–368 (PASPAAGHHAEPSAAQSSKA) show a composition bias toward low complexity.

The protein belongs to the PlsX family. Homodimer. Probably interacts with PlsY.

The protein localises to the cytoplasm. It carries out the reaction a fatty acyl-[ACP] + phosphate = an acyl phosphate + holo-[ACP]. Its pathway is lipid metabolism; phospholipid metabolism. Its function is as follows. Catalyzes the reversible formation of acyl-phosphate (acyl-PO(4)) from acyl-[acyl-carrier-protein] (acyl-ACP). This enzyme utilizes acyl-ACP as fatty acyl donor, but not acyl-CoA. The protein is Phosphate acyltransferase of Burkholderia multivorans (strain ATCC 17616 / 249).